Consider the following 243-residue polypeptide: Probable phosphatase CLI_3563 (243 aa).

Zn(2+) contacts are provided by histidine 8, histidine 10, histidine 16, histidine 41, glutamate 74, histidine 102, histidine 132, aspartate 192, and histidine 194.

Belongs to the PHP family. The cofactor is Zn(2+).

The sequence is that of Probable phosphatase CLI_3563 from Clostridium botulinum (strain Langeland / NCTC 10281 / Type F).